The primary structure comprises 204 residues: uncharacterized protein (204 aa).

A run of 4 helical transmembrane segments spans residues 21–50 (AWIV…LLFF), 92–114 (FFTA…WWWF), 150–172 (LGLR…VLSI), and 176–198 (LLAS…ETIL).

Its subcellular location is the cell membrane. This is an uncharacterized protein from Aquifex aeolicus (strain VF5).